Here is a 111-residue protein sequence, read N- to C-terminus: Wound-induced proteinase inhibitor 1 (111 aa).

An N-terminal signal peptide occupies residues methionine 1–alanine 23. Positions arginine 24 to leucine 36 are excised as a propeptide.

Belongs to the protease inhibitor I13 (potato type I serine protease inhibitor) family.

It localises to the secreted. The protein is Wound-induced proteinase inhibitor 1 of Solanum peruvianum (Peruvian tomato).